Here is a 287-residue protein sequence, read N- to C-terminus: Large ribosomal subunit protein uL2 (287 aa).

A disordered region spans residues 221–287 (RGSVMNPCDH…SKRSRGGRDS (67 aa)). Basic residues predominate over residues 258–287 (KTRKKNKPSNKLVVRRRRRISKRSRGGRDS).

It belongs to the universal ribosomal protein uL2 family. As to quaternary structure, part of the 50S ribosomal subunit. Forms a bridge to the 30S subunit in the 70S ribosome.

One of the primary rRNA binding proteins. Required for association of the 30S and 50S subunits to form the 70S ribosome, for tRNA binding and peptide bond formation. It has been suggested to have peptidyltransferase activity; this is somewhat controversial. Makes several contacts with the 16S rRNA in the 70S ribosome. The polypeptide is Large ribosomal subunit protein uL2 (Prochlorococcus marinus (strain MIT 9312)).